The following is a 352-amino-acid chain: Peptide chain release factor 1 (352 aa).

Q233 bears the N5-methylglutamine mark. The interval 288–309 is disordered; the sequence is NAKDRKEQVGSGDRSERIRTYN. Over residues 289–306 the composition is skewed to basic and acidic residues; that stretch reads AKDRKEQVGSGDRSERIR.

Belongs to the prokaryotic/mitochondrial release factor family. In terms of processing, methylated by PrmC. Methylation increases the termination efficiency of RF1.

It is found in the cytoplasm. In terms of biological role, peptide chain release factor 1 directs the termination of translation in response to the peptide chain termination codons UAG and UAA. The polypeptide is Peptide chain release factor 1 (Helicobacter pylori (strain HPAG1)).